A 480-amino-acid polypeptide reads, in one-letter code: Glycogen synthase 1 (480 aa).

An ADP-alpha-D-glucose-binding site is contributed by Lys15.

Belongs to the glycosyltransferase 1 family. Bacterial/plant glycogen synthase subfamily.

The catalysed reaction is [(1-&gt;4)-alpha-D-glucosyl](n) + ADP-alpha-D-glucose = [(1-&gt;4)-alpha-D-glucosyl](n+1) + ADP + H(+). Its pathway is glycan biosynthesis; glycogen biosynthesis. Functionally, synthesizes alpha-1,4-glucan chains using ADP-glucose. This chain is Glycogen synthase 1 (glgA1), found in Rhizobium meliloti (strain 1021) (Ensifer meliloti).